We begin with the raw amino-acid sequence, 175 residues long: Electron transport protein HydN (175 aa).

4 consecutive 4Fe-4S ferredoxin-type domains span residues 2 to 32 (NRFIIADASKCIGCRTCEVACVVSHQENQDC), 48 to 79 (KGVNISTATVCRQCEDAPCANVCPNGAISRDK), 80 to 109 (GFVHVMQERCIGCKTCVVACPYGAMEVVVR), and 124 to 157 (DKAEANKCDLCNHREDGPACMAACPTHALICVDR). Residues Cys12, Cys15, Cys18, Cys22, Cys58, Cys61, Cys66, Cys70, Cys89, Cys92, Cys95, Cys99, Cys131, Cys134, Cys143, and Cys147 each coordinate [4Fe-4S] cluster.

It depends on [4Fe-4S] cluster as a cofactor.

In terms of biological role, electron transport from formate to hydrogen. This is Electron transport protein HydN (hydN) from Escherichia coli O157:H7.